The following is a 239-amino-acid chain: Probable transcriptional regulatory protein Aave_3203 (239 aa).

Positions 1 to 20 (MAGHSKWANIQHRKGRQDEK) are disordered.

This sequence belongs to the TACO1 family.

Its subcellular location is the cytoplasm. In Paracidovorax citrulli (strain AAC00-1) (Acidovorax citrulli), this protein is Probable transcriptional regulatory protein Aave_3203.